The sequence spans 675 residues: DNA ligase (675 aa).

NAD(+) contacts are provided by residues 33-37 (DAEYD), 82-83 (SL), and glutamate 115. The active-site N6-AMP-lysine intermediate is the lysine 117. Residues arginine 138, glutamate 175, lysine 293, and lysine 317 each contribute to the NAD(+) site. Zn(2+)-binding residues include cysteine 411, cysteine 414, cysteine 429, and cysteine 435. One can recognise a BRCT domain in the interval 594 to 675 (IADNPLKDKT…LIGYFTTIVS (82 aa)).

The protein belongs to the NAD-dependent DNA ligase family. LigA subfamily. Mg(2+) serves as cofactor. Mn(2+) is required as a cofactor.

It carries out the reaction NAD(+) + (deoxyribonucleotide)n-3'-hydroxyl + 5'-phospho-(deoxyribonucleotide)m = (deoxyribonucleotide)n+m + AMP + beta-nicotinamide D-nucleotide.. Functionally, DNA ligase that catalyzes the formation of phosphodiester linkages between 5'-phosphoryl and 3'-hydroxyl groups in double-stranded DNA using NAD as a coenzyme and as the energy source for the reaction. It is essential for DNA replication and repair of damaged DNA. The protein is DNA ligase of Glaesserella parasuis serovar 5 (strain SH0165) (Haemophilus parasuis).